We begin with the raw amino-acid sequence, 330 residues long: Aspartate--ammonia ligase (330 aa).

It belongs to the class-II aminoacyl-tRNA synthetase family. AsnA subfamily.

The protein localises to the cytoplasm. It catalyses the reaction L-aspartate + NH4(+) + ATP = L-asparagine + AMP + diphosphate + H(+). The protein operates within amino-acid biosynthesis; L-asparagine biosynthesis; L-asparagine from L-aspartate (ammonia route): step 1/1. The protein is Aspartate--ammonia ligase of Klebsiella pneumoniae subsp. pneumoniae (strain ATCC 700721 / MGH 78578).